The primary structure comprises 122 residues: Large ribosomal subunit protein uL14 (122 aa).

Belongs to the universal ribosomal protein uL14 family. As to quaternary structure, part of the 50S ribosomal subunit. Forms a cluster with proteins L3 and L19. In the 70S ribosome, L14 and L19 interact and together make contacts with the 16S rRNA in bridges B5 and B8.

Functionally, binds to 23S rRNA. Forms part of two intersubunit bridges in the 70S ribosome. The sequence is that of Large ribosomal subunit protein uL14 from Thiobacillus denitrificans (strain ATCC 25259 / T1).